Here is a 695-residue protein sequence, read N- to C-terminus: NADPH--cytochrome P450 reductase (695 aa).

Residues 1–8 (MAQLDTLD) lie on the Lumenal side of the membrane. A helical membrane pass occupies residues 9 to 31 (VVVLAVLLAGSIAYFTKGTFWAV). The Cytoplasmic segment spans residues 32–695 (AKDPYASSGP…SGSYQEDVWS (664 aa)). The Flavodoxin-like domain occupies 66 to 221 (CVIFYGSQTG…DFLAWKEPMW (156 aa)). Residues 72–77 (SQTGTA), 123–126 (ATYG), 169–178 (LGNNTYEHYN), and Asp-204 each bind FMN. Positions 277 to 538 (HNPYIAPIVE…HVRHSNFKLP (262 aa)) constitute an FAD-binding FR-type domain. Arg-296 is an NADP(+) binding site. Residues 451-454 (RYYS), 469-471 (TAV), and 486-489 (GVTT) each bind FAD. A disordered region spans residues 497–516 (QKQNGDPSPDPHGQTYAING). Residues Thr-552, 614–615 (SR), 620–624 (KVYVQ), and Glu-656 each bind NADP(+). Residue Trp-694 coordinates FAD.

This sequence belongs to the NADPH--cytochrome P450 reductase family. The protein in the N-terminal section; belongs to the flavodoxin family. It in the C-terminal section; belongs to the flavoprotein pyridine nucleotide cytochrome reductase family. It depends on FAD as a cofactor. The cofactor is FMN.

The protein localises to the endoplasmic reticulum membrane. The protein resides in the mitochondrion outer membrane. Its subcellular location is the cell membrane. It carries out the reaction 2 oxidized [cytochrome P450] + NADPH = 2 reduced [cytochrome P450] + NADP(+) + H(+). This enzyme is required for electron transfer from NADP to cytochrome P450 in microsomes. It can also provide electron transfer to heme oxygenase and cytochrome B5. Involved in ergosterol biosynthesis. This is NADPH--cytochrome P450 reductase from Emericella nidulans (strain FGSC A4 / ATCC 38163 / CBS 112.46 / NRRL 194 / M139) (Aspergillus nidulans).